We begin with the raw amino-acid sequence, 181 residues long: UPF0398 protein LMOf2365_1918 (181 aa).

It belongs to the UPF0398 family.

The chain is UPF0398 protein LMOf2365_1918 from Listeria monocytogenes serotype 4b (strain F2365).